Reading from the N-terminus, the 122-residue chain is Small ribosomal subunit protein uS13 (122 aa).

Residues 98–122 (VRGQRTHTNARTRKGPAKAIAGKKK) form a disordered region.

The protein belongs to the universal ribosomal protein uS13 family. As to quaternary structure, part of the 30S ribosomal subunit. Forms a loose heterodimer with protein S19. Forms two bridges to the 50S subunit in the 70S ribosome.

Located at the top of the head of the 30S subunit, it contacts several helices of the 16S rRNA. In the 70S ribosome it contacts the 23S rRNA (bridge B1a) and protein L5 of the 50S subunit (bridge B1b), connecting the 2 subunits; these bridges are implicated in subunit movement. Contacts the tRNAs in the A and P-sites. This is Small ribosomal subunit protein uS13 from Jannaschia sp. (strain CCS1).